Consider the following 258-residue polypeptide: Myelin proteolipid protein (258 aa).

The Cytoplasmic segment spans residues 1 to 22 (MFPVRHALLCKALGCYDCCIRC). Residues cysteine 18, cysteine 19, and cysteine 22 are each lipidated (S-palmitoyl cysteine). Residues 23-48 (LGAVPYPSLVSTLLCFTGMALFCGCG) traverse the membrane as a helical segment. Residues 49–82 (HEALAHTEVLVETYFVRNIQDYVILASFIKYFQY) lie on the Extracellular side of the membrane. Residues 83 to 103 (VIYGLASFFFLYCILLLAEGF) traverse the membrane as a helical segment. Residues 104–128 (YTTSAVKQTFGEFRSTRCGRCLSLT) are Cytoplasmic-facing. S-palmitoyl cysteine attachment occurs at residues cysteine 121 and cysteine 124. A helical membrane pass occupies residues 129-149 (FIIVTYVLAVIWLAVFAFTAI). The Extracellular portion of the chain corresponds to 150 to 218 (PSSSSLIWHR…KTKEFFVTYD (69 aa)). Cysteine 181 and cysteine 200 are disulfide-bonded. Residues 219-239 (LYIAAFAGAGIALLALFLYVV) traverse the membrane as a helical segment. The Cytoplasmic portion of the chain corresponds to 240–258 (ATTYNYAVLRFLGRKGLRC).

The protein belongs to the myelin proteolipid protein family. Central nervous system. Highest levels in spinal cord and medulla oblongata.

It is found in the cell membrane. This is the major myelin protein from the central nervous system. It plays an important role in the formation or maintenance of the multilamellar structure of myelin. May be involved in neuron and glial cell differentiation. This chain is Myelin proteolipid protein (plp), found in Oncorhynchus mykiss (Rainbow trout).